The following is a 707-amino-acid chain: Ornithine decarboxylase (707 aa).

The interval 83 to 102 (NRNPLSRADSAAGREETAQT) is disordered. Residue Lys-288 is modified to N6-(pyridoxal phosphate)lysine. Pyridoxal 5'-phosphate contacts are provided by residues Ser-421, Gly-458, and 498–501 (EPGR). Substrate is bound at residue 561–562 (FD). Cys-634 serves as the catalytic Proton donor; shared with dimeric partner. Residue Asp-635 coordinates substrate. Tyr-663 lines the pyridoxal 5'-phosphate pocket.

It belongs to the Orn/Lys/Arg decarboxylase class-II family. In terms of assembly, homodimer. Only the dimer is catalytically active, as the active sites are constructed of residues from both monomers. It depends on pyridoxal 5'-phosphate as a cofactor.

The enzyme catalyses L-ornithine + H(+) = putrescine + CO2. Its pathway is amine and polyamine biosynthesis; putrescine biosynthesis via L-ornithine pathway; putrescine from L-ornithine: step 1/1. Inhibited by antizyme (AZ) in response to polyamine levels. AZ inhibits the assembly of the functional homodimer by binding to ODC monomers and targeting them for ubiquitin-independent proteolytic destruction by the 26S proteasome. Inhibited by 1-amino-oxy-3-aminopropane (APA, an isosteric analog of putrescine). Irreversibly inhibited by alpha-difluoromethylornithine (DFMO, a curative agent of West African sleeping sickness). Its function is as follows. Catalyzes the first and rate-limiting step of polyamine biosynthesis that converts ornithine into putrescine, which is the precursor for the polyamines, spermidine and spermine. Polyamines are essential for cell proliferation and are implicated in cellular processes, ranging from DNA replication to apoptosis. The sequence is that of Ornithine decarboxylase from Leishmania donovani.